The chain runs to 99 residues: Small ribosomal subunit protein bS20 (99 aa).

Belongs to the bacterial ribosomal protein bS20 family.

Binds directly to 16S ribosomal RNA. This chain is Small ribosomal subunit protein bS20, found in Thermotoga neapolitana (strain ATCC 49049 / DSM 4359 / NBRC 107923 / NS-E).